A 1087-amino-acid chain; its full sequence is Error-prone DNA polymerase 2 (1087 aa).

Residues 1033-1064 are disordered; it reads DGAFRPPTGRGDEFAHGSPGSADSRGKAPPGV.

The protein belongs to the DNA polymerase type-C family. DnaE2 subfamily.

The protein localises to the cytoplasm. The catalysed reaction is DNA(n) + a 2'-deoxyribonucleoside 5'-triphosphate = DNA(n+1) + diphosphate. In terms of biological role, DNA polymerase involved in damage-induced mutagenesis and translesion synthesis (TLS). It is not the major replicative DNA polymerase. The protein is Error-prone DNA polymerase 2 of Rhizobium meliloti (strain 1021) (Ensifer meliloti).